Here is a 508-residue protein sequence, read N- to C-terminus: MNTTETSRAAAPLVLILGLGETGVAAARWCARQGSPLRVADTRAQPGGLAALQAALADATVEYRLGCGEQFPPDLLDGVAQIVLSPGLVPHESPTRELLEQARERNVEVVGEIELFARALAGLAESREYRPRVLAITGTNGKTTVTALTRQLIEAGGMSARAAGNISPAALAALIDALDQDDLPQVWVLELSSFQLETTRTLAPDAAVVLNVTQDHLDWHGDMQAYAQAKARILKPARLAIVNRDDPLTVAMVESLQALNVRSFGRDVPALVGDMGLELGQGVAWLTACESNDFDEPAPRRKKDAPPPTRAGGRMSRLMPVDALRIRGVHNALNALAAMQLARSLDLGWGPMLRTLRDYAGEPHRAELVRSIGDVDYINDSKGTNVGATVAALEGLGQQVVLIAGGQGKGQDFSPLVPVVRRHARAVVLIGVDGAAIGKVLEPTGVPCVAAADMREAVRRAAELAQPGDAVLLSPACASFDMFRNYPHRGEVFAAEVQELALDRGEVA.

Position 138–144 (138–144 (GTNGKTT)) interacts with ATP. Positions 294–314 (FDEPAPRRKKDAPPPTRAGGR) are disordered.

This sequence belongs to the MurCDEF family.

It is found in the cytoplasm. It catalyses the reaction UDP-N-acetyl-alpha-D-muramoyl-L-alanine + D-glutamate + ATP = UDP-N-acetyl-alpha-D-muramoyl-L-alanyl-D-glutamate + ADP + phosphate + H(+). Its pathway is cell wall biogenesis; peptidoglycan biosynthesis. Functionally, cell wall formation. Catalyzes the addition of glutamate to the nucleotide precursor UDP-N-acetylmuramoyl-L-alanine (UMA). This Bordetella parapertussis (strain 12822 / ATCC BAA-587 / NCTC 13253) protein is UDP-N-acetylmuramoylalanine--D-glutamate ligase.